A 163-amino-acid polypeptide reads, in one-letter code: uncharacterized protein (163 aa).

The protein belongs to the LcrH/SycD chaperone family.

This is an uncharacterized protein from Escherichia coli (strain K12).